The chain runs to 476 residues: ATP synthase subunit beta 2 (476 aa).

Residue 160–167 (GGAGVGKT) coordinates ATP.

The protein belongs to the ATPase alpha/beta chains family. As to quaternary structure, F-type ATPases have 2 components, CF(1) - the catalytic core - and CF(0) - the membrane proton channel. CF(1) has five subunits: alpha(3), beta(3), gamma(1), delta(1), epsilon(1). CF(0) has four main subunits: a(1), b(1), b'(1) and c(9-12).

The protein localises to the cell inner membrane. It carries out the reaction ATP + H2O + 4 H(+)(in) = ADP + phosphate + 5 H(+)(out). Its function is as follows. Produces ATP from ADP in the presence of a proton gradient across the membrane. The catalytic sites are hosted primarily by the beta subunits. The protein is ATP synthase subunit beta 2 of Bradyrhizobium sp. (strain BTAi1 / ATCC BAA-1182).